A 54-amino-acid chain; its full sequence is Califin-B (54 aa).

Cys25 and Cys53 form a disulfide bridge. Leu36 is modified (leucine amide).

This sequence belongs to the molluscan ELH family. As to quaternary structure, this protein consists of a large 36-residue subunit, bound by a single disulfide-bond to a small 18-residue subunit.

The protein resides in the secreted. Injected in sexually mature animals califin B excites LB and LC cells of the abdominal ganglion and cause egg-laying. This chain is Califin-B, found in Aplysia californica (California sea hare).